A 293-amino-acid polypeptide reads, in one-letter code: MPWIQLRLSANEDNAEKYSDWLSACGSQAVTFIDAKDTPIYEPLPGDEVIYWSNTVVMGLFEASHDMDKVISYLQSIHPDKEQMRYKLEQLEDKDWEREWMDNFHPMKFGERLWVCPSWRDVPDPEAVNVMLDPGLAFGTGTHPTTALCLTWLDGLDLQDKTVVDFGCGSGILSLAALKLGAKKVIGIDIDPQALQASLANAERNNVSDRLELYLPKDQPEFKADVVVANILAGPLRELAPVIIEYVGDKGLLALSGVLEEQAQTLQTIYGQWCDMEPVSVQEEWVRLNGQRK.

S-adenosyl-L-methionine is bound by residues Thr-146, Gly-167, Asp-189, and Asn-230.

The protein belongs to the methyltransferase superfamily. PrmA family.

The protein localises to the cytoplasm. It carries out the reaction L-lysyl-[protein] + 3 S-adenosyl-L-methionine = N(6),N(6),N(6)-trimethyl-L-lysyl-[protein] + 3 S-adenosyl-L-homocysteine + 3 H(+). Functionally, methylates ribosomal protein L11. The protein is Ribosomal protein L11 methyltransferase of Colwellia psychrerythraea (strain 34H / ATCC BAA-681) (Vibrio psychroerythus).